A 260-amino-acid chain; its full sequence is Large ribosomal subunit protein uL2 (260 aa).

The segment at 208–230 (EHPHGGGNHQHIGHPSTVRRDAS) is disordered.

The protein belongs to the universal ribosomal protein uL2 family.

Its subcellular location is the cytoplasm. This is Large ribosomal subunit protein uL2 from Caenorhabditis elegans.